A 439-amino-acid chain; its full sequence is Tol-Pal system protein TolB (439 aa).

A signal peptide spans 1 to 22 (MTKFPRWLAILVGLLFPLSALT).

The protein belongs to the TolB family. In terms of assembly, the Tol-Pal system is composed of five core proteins: the inner membrane proteins TolA, TolQ and TolR, the periplasmic protein TolB and the outer membrane protein Pal. They form a network linking the inner and outer membranes and the peptidoglycan layer.

Its subcellular location is the periplasm. Part of the Tol-Pal system, which plays a role in outer membrane invagination during cell division and is important for maintaining outer membrane integrity. The protein is Tol-Pal system protein TolB of Xylella fastidiosa (strain M12).